Reading from the N-terminus, the 293-residue chain is Dehydrodolichyl diphosphate synthase complex subunit NUS1 (293 aa).

A run of 3 helical transmembrane segments spans residues 1 to 23, 35 to 56, and 117 to 135; these read MTGL…RTLT, WIWR…GFTL, and IASL…ISVY. N144 and N271 each carry an N-linked (GlcNAc...) asparagine glycan. The RXG motif; crucial for prenyltransferase activity signature appears at 290–292; that stretch reads RLG. Residues L291 and G292 each contribute to the isopentenyl diphosphate site.

It belongs to the UPP synthase family. The active dehydrodolichyl diphosphate synthase complex is a heterotetramer composed of a dimer of heterodimer of DHDDS and NUS1. Interacts with NPC2. It depends on Mg(2+) as a cofactor.

The protein resides in the endoplasmic reticulum membrane. It carries out the reaction n isopentenyl diphosphate + (2E,6E)-farnesyl diphosphate = a di-trans,poly-cis-polyprenyl diphosphate + n diphosphate. Its pathway is protein modification; protein glycosylation. It functions in the pathway lipid metabolism. Activated by phospholipids including cardiolipin, phosphatidylcholine, phosphatidylethanolamine, phosphatidylinositol and phosphatidylserine. Functionally, with DHDDS, forms the dehydrodolichyl diphosphate synthase (DDS) complex, an essential component of the dolichol monophosphate (Dol-P) biosynthetic machinery. Both subunits contribute to enzymatic activity, i.e. condensation of multiple copies of isopentenyl pyrophosphate (IPP) to farnesyl pyrophosphate (FPP) to produce dehydrodolichyl diphosphate (Dedol-PP), a precursor of dolichol phosphate which is utilized as a sugar carrier in protein glycosylation in the endoplasmic reticulum (ER). Synthesizes long-chain polyprenols, mostly of C95 and C100 chain length. Regulates the glycosylation and stability of nascent NPC2, thereby promoting trafficking of LDL-derived cholesterol. Acts as a specific receptor for the N-terminus of Nogo-B, a neural and cardiovascular regulator. The protein is Dehydrodolichyl diphosphate synthase complex subunit NUS1 of Homo sapiens (Human).